Here is a 220-residue protein sequence, read N- to C-terminus: Glycerol-3-phosphate acyltransferase (220 aa).

Helical transmembrane passes span 11–31, 70–90, 96–116, 127–147, 153–173, and 192–212; these read INVIFTLLGYLIGGIPFGYAL, LLVLILDLFKGMFAVFLSKLF, LQWMVAIASILGHCYSPFLNF, GSVVLLIPIESLIGLTVWFFV, ISSLASILGVGTATVLIFFVP, and PMVLIFIFTLIKHAGNIFNLL.

Belongs to the PlsY family. In terms of assembly, probably interacts with PlsX.

The protein localises to the cell inner membrane. It carries out the reaction an acyl phosphate + sn-glycerol 3-phosphate = a 1-acyl-sn-glycero-3-phosphate + phosphate. Its pathway is lipid metabolism; phospholipid metabolism. Functionally, catalyzes the transfer of an acyl group from acyl-phosphate (acyl-PO(4)) to glycerol-3-phosphate (G3P) to form lysophosphatidic acid (LPA). This enzyme utilizes acyl-phosphate as fatty acyl donor, but not acyl-CoA or acyl-ACP. The sequence is that of Glycerol-3-phosphate acyltransferase from Helicobacter pylori (strain J99 / ATCC 700824) (Campylobacter pylori J99).